A 518-amino-acid polypeptide reads, in one-letter code: Coiled-coil domain-containing protein 82 (518 aa).

Positions 1 to 14 (MVHVRRHETRKNSK) are enriched in basic residues. The tract at residues 1-266 (MVHVRRHETR…EDDYRYDEDG (266 aa)) is disordered. The span at 16–27 (QKPEQKSRVDWH) shows a compositional bias: basic and acidic residues. Residues 38-67 (DSDEELDSNEELDSDEEHDSGESIDSDEEL) show a composition bias toward acidic residues. The span at 68-89 (DISKKSDINELPEKETELKLIK) shows a compositional bias: basic and acidic residues. Residues 92 to 107 (SQGSNSKHLTNTSNSS) are compositionally biased toward polar residues. Residues 111–127 (EQLKETKHNDLPDDEAH) are compositionally biased toward basic and acidic residues. Ser170 and Ser194 each carry phosphoserine. Positions 191-201 (DECSSLEMEQE) are enriched in acidic residues. Phosphothreonine is present on Thr202. The stretch at 204-232 (EKSSAARKREYHQKLQELSERSRQRRRRN) forms a coiled coil. Residues 215-225 (HQKLQELSERS) show a composition bias toward basic and acidic residues. Residues 249–266 (GEEDEDEDEDDYRYDEDG) show a composition bias toward acidic residues. A Phosphoserine modification is found at Ser305.

The sequence is that of Coiled-coil domain-containing protein 82 (Ccdc82) from Mus musculus (Mouse).